A 238-amino-acid polypeptide reads, in one-letter code: Pyridoxine 5'-phosphate synthase (238 aa).

Asparagine 7 provides a ligand contact to 3-amino-2-oxopropyl phosphate. Aspartate 9–histidine 10 serves as a coordination point for 1-deoxy-D-xylulose 5-phosphate. Arginine 18 lines the 3-amino-2-oxopropyl phosphate pocket. Histidine 43 acts as the Proton acceptor in catalysis. Positions 45 and 50 each coordinate 1-deoxy-D-xylulose 5-phosphate. Glutamate 70 (proton acceptor) is an active-site residue. Residue threonine 100 participates in 1-deoxy-D-xylulose 5-phosphate binding. Histidine 190 serves as the catalytic Proton donor. 3-amino-2-oxopropyl phosphate-binding positions include glycine 191 and glycine 212–histidine 213.

The protein belongs to the PNP synthase family. Homooctamer; tetramer of dimers.

The protein localises to the cytoplasm. It carries out the reaction 3-amino-2-oxopropyl phosphate + 1-deoxy-D-xylulose 5-phosphate = pyridoxine 5'-phosphate + phosphate + 2 H2O + H(+). It functions in the pathway cofactor biosynthesis; pyridoxine 5'-phosphate biosynthesis; pyridoxine 5'-phosphate from D-erythrose 4-phosphate: step 5/5. In terms of biological role, catalyzes the complicated ring closure reaction between the two acyclic compounds 1-deoxy-D-xylulose-5-phosphate (DXP) and 3-amino-2-oxopropyl phosphate (1-amino-acetone-3-phosphate or AAP) to form pyridoxine 5'-phosphate (PNP) and inorganic phosphate. The protein is Pyridoxine 5'-phosphate synthase of Prochlorococcus marinus (strain AS9601).